Reading from the N-terminus, the 243-residue chain is High affinity immunoglobulin epsilon receptor subunit beta (243 aa).

The disordered stretch occupies residues Met1 to Gln48. Topologically, residues Met1 to Glu59 are cytoplasmic. A helical transmembrane segment spans residues Phe60–Val79. The Extracellular segment spans residues Cys80–Arg97. A helical membrane pass occupies residues Ala98–Met117. Residues Ser118 to Ser130 are Cytoplasmic-facing. Residues Leu131–Leu150 form a helical membrane-spanning segment. Residues Asn151–Glu179 are Extracellular-facing. A helical transmembrane segment spans residues Leu180–Ile199. At Ile200–Ser243 the chain is on the cytoplasmic side. Tyr218 and Tyr224 each carry phosphotyrosine. Residue Ser225 is modified to Phosphoserine. Tyr228 carries the phosphotyrosine modification.

It belongs to the MS4A family. As to quaternary structure, tetramer of an alpha chain, a beta chain, and two disulfide linked gamma chains. Binds LILRB1. Interacts with FES/FPS and LYN. Interacts with FGR. In terms of processing, phosphorylated on tyrosine residues by LYN.

The protein localises to the membrane. Functionally, high affinity receptor that binds to the Fc region of immunoglobulins epsilon. Aggregation of FCER1 by multivalent antigens is required for the full mast cell response, including the release of preformed mediators (such as histamine) by degranulation and de novo production of lipid mediators and cytokines. Also mediates the secretion of important lymphokines. Binding of allergen to receptor-bound IgE leads to cell activation and the release of mediators responsible for the manifestations of allergy. In Rattus norvegicus (Rat), this protein is High affinity immunoglobulin epsilon receptor subunit beta (Ms4a2).